A 448-amino-acid chain; its full sequence is Integrator complex subunit 15 (448 aa).

This sequence belongs to the Integrator subunit 15 family. As to quaternary structure, component of the Integrator complex, composed of core subunits INTS1, INTS2, INTS3, INTS4, INTS5, INTS6, INTS7, INTS8, INTS9/RC74, INTS10, INTS11/CPSF3L, INTS12, INTS13, INTS14 and INTS15. The core complex associates with protein phosphatase 2A subunits PPP2CA and PPP2R1A, to form the Integrator-PP2A (INTAC) complex. INTS15 is part of the tail subcomplex, composed of INTS10, INTS13, INTS14 and INTS15.

The protein localises to the nucleus. It localises to the chromosome. Its function is as follows. Component of the integrator complex, a multiprotein complex that terminates RNA polymerase II (Pol II) transcription in the promoter-proximal region of genes. The integrator complex provides a quality checkpoint during transcription elongation by driving premature transcription termination of transcripts that are unfavorably configured for transcriptional elongation: the complex terminates transcription by (1) catalyzing dephosphorylation of the C-terminal domain (CTD) of Pol II subunit POLR2A/RPB1 and SUPT5H/SPT5, (2) degrading the exiting nascent RNA transcript via endonuclease activity and (3) promoting the release of Pol II from bound DNA. The integrator complex is also involved in terminating the synthesis of non-coding Pol II transcripts, such as enhancer RNAs (eRNAs), small nuclear RNAs (snRNAs), telomerase RNAs and long non-coding RNAs (lncRNAs). INTS15 is part of the integrator tail module that acts as a platform for the recruitment of transcription factors at promoters. Within the integrator complex, INTS15 is required to bridge different integrator modules. The polypeptide is Integrator complex subunit 15 (Mus musculus (Mouse)).